The primary structure comprises 1008 residues: Envelopment polyprotein (1008 aa).

Positions 1–17 (MVRTYLLLLLLCGPATP) are cleaved as a signal peptide. Residues 18 to 394 (FFNHLMDVTR…NWANIHCFSK (377 aa)) are Lumenal-facing. Asn-34, Asn-70, and Asn-108 each carry an N-linked (GlcNAc...) asparagine; by host glycan. 8 cysteine pairs are disulfide-bonded: Cys-138/Cys-269, Cys-156/Cys-166, Cys-206/Cys-247, Cys-216/Cys-226, Cys-233/Cys-238, Cys-292/Cys-295, Cys-299/Cys-368, and Cys-319/Cys-324. Asn-208 carries N-linked (GlcNAc...) asparagine; by host glycosylation. The chain crosses the membrane as a helical span at residues 395 to 415 (EQVLILVAVSSLCILLLASVL). Residues 416 to 496 (RALKVIATFT…VRQKMFNLTR (81 aa)) are Cytoplasmic-facing. Residues 419-465 (KVIATFTWKIIKPFWWILSLLCRTCSKRLNKRAERLKESIHSLEEGL) form a golgi retention signal region. The segment at 461–465 (LEEGL) is important for correct targeting of the glycoproteins to the Golgi complex but not for heterodimerization. The internal signal sequence for glycoprotein C stretch occupies residues 497 to 513 (LSPVVVGMLCLACPVES). Intrachain disulfides connect Cys-514-Cys-555, Cys-527-Cys-537, Cys-580-Cys-677, Cys-595-Cys-789, Cys-601-Cys-650, Cys-607-Cys-657, Cys-612-Cys-639, Cys-643-Cys-648, Cys-728-Cys-742, Cys-758-Cys-771, Cys-851-Cys-924, and Cys-861-Cys-864. Topologically, residues 514-977 (CSDSISVTAS…GWFKASWLRA (464 aa)) are lumenal. The fusion loop stretch occupies residues 601-607 (CHLMGAC). The fusion loop stretch occupies residues 644–655 (GGALCQCFNMRP). 2 N-linked (GlcNAc...) asparagine; by host glycosylation sites follow: Asn-691 and Asn-696. Asn-912 and Asn-949 each carry an N-linked (GlcNAc...) asparagine; by host glycan. The chain crosses the membrane as a helical span at residues 978 to 998 (IWAILGGTVSLIIGVVIIYMV). Over 999 to 1008 (FTLCLKVKKS) the chain is Cytoplasmic.

The protein belongs to the phlebovirus envelope glycoprotein family. As to quaternary structure, homodimer. Heterodimer with glycoprotein C. Homotrimer (postfusion). Heterodimer with glycoprotein N. Homotrimer (postfusion). Post-translationally, specific enzymatic cleavages in vivo yield mature proteins including glycoprotein C and glycoprotein N. In terms of processing, the cytoplasmic tail is Palmitoylated. Glycosylated. Contains principally poly-N-acetyllactosamine glycans. Post-translationally, glycosylated. Contains principally oligomannose-type glycans that can attach to host CD209/DC-SIGN. In terms of processing, palmitoylated.

Its subcellular location is the virion membrane. The protein localises to the host Golgi apparatus membrane. It is found in the host endoplasmic reticulum membrane. Its function is as follows. Structural component of the virion that interacts with glycoprotein C. It shields the hydrophobic fusion loops of the glycoprotein C, preventing premature fusion. The glycoprotein protrusions are arranged on an icosahedral lattice, with T=12 triangulation. They are able to attach the virion to the host cell receptor CD209/DC-SIGN and to promote fusion of membranes with the late endosome after endocytosis of the virion. Plays a role in the packaging of ribonucleoproteins during virus assembly. In terms of biological role, structural component of the virion that interacts with glycoprotein N. Acts as a class II fusion protein that is activated upon acidification and subsequent repositioning of the glycoprotein N. The glycoprotein protrusions are arranged on an icosahedral lattice, with T=12 triangulation. They are able to attach the virion to the host cell receptor CD209/DC-SIGN and to promote fusion of membranes with the late endosome after endocytosis of the virion. The protein is Envelopment polyprotein (GP) of Homo sapiens (Human).